Consider the following 218-residue polypeptide: ATP phosphoribosyltransferase (218 aa).

This sequence belongs to the ATP phosphoribosyltransferase family. Short subfamily. In terms of assembly, heteromultimer composed of HisG and HisZ subunits.

The protein localises to the cytoplasm. The enzyme catalyses 1-(5-phospho-beta-D-ribosyl)-ATP + diphosphate = 5-phospho-alpha-D-ribose 1-diphosphate + ATP. The protein operates within amino-acid biosynthesis; L-histidine biosynthesis; L-histidine from 5-phospho-alpha-D-ribose 1-diphosphate: step 1/9. Functionally, catalyzes the condensation of ATP and 5-phosphoribose 1-diphosphate to form N'-(5'-phosphoribosyl)-ATP (PR-ATP). Has a crucial role in the pathway because the rate of histidine biosynthesis seems to be controlled primarily by regulation of HisG enzymatic activity. This is ATP phosphoribosyltransferase (hisG) from Deinococcus radiodurans (strain ATCC 13939 / DSM 20539 / JCM 16871 / CCUG 27074 / LMG 4051 / NBRC 15346 / NCIMB 9279 / VKM B-1422 / R1).